A 216-amino-acid polypeptide reads, in one-letter code: Octanoyltransferase (216 aa).

A BPL/LPL catalytic domain is found at 29–209 (DRAGECVWLL…SFDAVFGPCP (181 aa)). Substrate is bound by residues 68-75 (RGGQYTYH), 140-142 (AIG), and 153-155 (GFA). The active-site Acyl-thioester intermediate is the cysteine 171.

This sequence belongs to the LipB family.

It localises to the cytoplasm. The catalysed reaction is octanoyl-[ACP] + L-lysyl-[protein] = N(6)-octanoyl-L-lysyl-[protein] + holo-[ACP] + H(+). It functions in the pathway protein modification; protein lipoylation via endogenous pathway; protein N(6)-(lipoyl)lysine from octanoyl-[acyl-carrier-protein]: step 1/2. In terms of biological role, catalyzes the transfer of endogenously produced octanoic acid from octanoyl-acyl-carrier-protein onto the lipoyl domains of lipoate-dependent enzymes. Lipoyl-ACP can also act as a substrate although octanoyl-ACP is likely to be the physiological substrate. The protein is Octanoyltransferase of Rhodospirillum rubrum (strain ATCC 11170 / ATH 1.1.1 / DSM 467 / LMG 4362 / NCIMB 8255 / S1).